Here is a 387-residue protein sequence, read N- to C-terminus: Phosphoglycerate kinase (387 aa).

Substrate-binding positions include 21 to 23 (DLN), arginine 36, 59 to 62 (HLGR), arginine 114, and arginine 147. ATP-binding positions include lysine 198, glutamate 314, and 340–343 (GGDT).

The protein belongs to the phosphoglycerate kinase family. Monomer.

It localises to the cytoplasm. The catalysed reaction is (2R)-3-phosphoglycerate + ATP = (2R)-3-phospho-glyceroyl phosphate + ADP. Its pathway is carbohydrate degradation; glycolysis; pyruvate from D-glyceraldehyde 3-phosphate: step 2/5. This is Phosphoglycerate kinase from Erwinia tasmaniensis (strain DSM 17950 / CFBP 7177 / CIP 109463 / NCPPB 4357 / Et1/99).